A 488-amino-acid polypeptide reads, in one-letter code: N-succinylglutamate 5-semialdehyde dehydrogenase 2 (488 aa).

221-226 (GSSNTG) provides a ligand contact to NAD(+). Residues E244 and C278 contribute to the active site.

It belongs to the aldehyde dehydrogenase family. AstD subfamily.

It carries out the reaction N-succinyl-L-glutamate 5-semialdehyde + NAD(+) + H2O = N-succinyl-L-glutamate + NADH + 2 H(+). Its pathway is amino-acid degradation; L-arginine degradation via AST pathway; L-glutamate and succinate from L-arginine: step 4/5. Its function is as follows. Catalyzes the NAD-dependent reduction of succinylglutamate semialdehyde into succinylglutamate. This is N-succinylglutamate 5-semialdehyde dehydrogenase 2 from Pseudoalteromonas translucida (strain TAC 125).